A 288-amino-acid polypeptide reads, in one-letter code: Ion-translocating oxidoreductase complex subunit D (288 aa).

The next 9 helical transmembrane spans lie at 26–46, 47–67, 80–100, 101–121, 126–146, 159–179, 200–220, 235–255, and 256–276; these read IVAL…AALG, NIIA…KAFN, LGLL…IFIG, GAFA…YTFH, AWVF…IPIL, GFLT…LILV, VLGD…VFFI, IVYG…SGNY, and VWGT…IELK.

This sequence belongs to the NqrB/RnfD family. As to quaternary structure, the Rnf complex is probably composed of eight subunits, including RnfA, RnfB, RnfC, RnfD, RnfE and RnfG. Requires FMN as cofactor.

It is found in the cell membrane. In terms of biological role, part of a membrane-bound complex that couples electron transfer with translocation of ions across the membrane. Catalyzes Na(+) transport, most probably coupled to electron transfer from reduced ferredoxin to methanophenazine and heterodisulfide reductase. Involved in heterodisulfide reduction during methanogenesis from acetate. The sequence is that of Ion-translocating oxidoreductase complex subunit D from Methanosarcina acetivorans (strain ATCC 35395 / DSM 2834 / JCM 12185 / C2A).